Reading from the N-terminus, the 257-residue chain is Thioesterase frbE (257 aa).

Belongs to the AMT4 thioesterase family.

It functions in the pathway antifungal biosynthesis. Functionally, thioesterase; part of the gene cluster that mediates the biosynthesis of the antifungal antibiotic FR901469, an inhibitor of beta-1,3-glucansynthase, exerting antifungal activity against the pathogenes Candida albicans and Aspergillus fumigatus. FR901469 is a cyclic depsipeptide containing 12 amino acid residues and a fatty acid chain. The NRPS frbI contains 12 modules responsible for the formation of the depsipeptide backbone which is denoted as Acyl-Thr-Ala-Tyr-Val-4OHPro-Thr-Thr-3OHPro-threo3OHGln-Gly-Thr-Orn-OH (C71H116N14O23). The PKS frbB is probably involved in the production of the hydrocarbon chain, and the acyl-CoA ligase frbC might be involved in the transport of the chain to the peptide ptoduct of frbI. Because FR901469 contains 3 hydroxylated amino acid residues, the 3 oxygenases frbA, frbH, and frbJ might be participating in amino acid hydroxylation. As no thioesterase domains were detected in frbI or frbB, the thioesterases frbD and frbE may instead release and cyclize the products of the NRPS and PKS, respectively. This chain is Thioesterase frbE, found in Dothideomycetidae sp. (strain 11243) (Fungal sp. (strain No.11243)).